A 148-amino-acid chain; its full sequence is Nucleoside diphosphate kinase (148 aa).

Residues Lys-9, Phe-57, Arg-85, Thr-91, Arg-102, and Asn-112 each contribute to the ATP site. Thr-91 bears the Phosphothreonine mark. His-115 acts as the Pros-phosphohistidine intermediate in catalysis. Residue Ser-122 is modified to Phosphoserine.

This sequence belongs to the NDK family. In terms of assembly, homotetramer. Mg(2+) serves as cofactor.

It localises to the cytoplasm. The catalysed reaction is a 2'-deoxyribonucleoside 5'-diphosphate + ATP = a 2'-deoxyribonucleoside 5'-triphosphate + ADP. It carries out the reaction a ribonucleoside 5'-diphosphate + ATP = a ribonucleoside 5'-triphosphate + ADP. Major role in the synthesis of nucleoside triphosphates other than ATP. The ATP gamma phosphate is transferred to the NDP beta phosphate via a ping-pong mechanism, using a phosphorylated active-site intermediate. In Oceanobacillus iheyensis (strain DSM 14371 / CIP 107618 / JCM 11309 / KCTC 3954 / HTE831), this protein is Nucleoside diphosphate kinase.